The sequence spans 202 residues: Securin (202 aa).

N-acetylalanine is present on Ala-2. A disordered region spans residues 35–90 (LDGRSQVSTPRFGKTFDAPPALPKATRKALGTVNRATEKSVKTKGPLKQKQPSFSA). A D-box motif is present at residues 61–64 (RKAL). 2 consecutive short sequence motifs (TEK-box) follow at residues 71–73 (TEK) and 94–96 (TEK). An SH3-binding motif is present at residues 163–173 (PPSPVKMPSPP). A Phosphoserine; by CDK1 modification is found at Ser-165.

It belongs to the securin family. In terms of assembly, interacts with RPS10 and DNAJA1. Interacts with the caspase-like ESPL1, and prevents its protease activity probably by covering its active site. Interacts with TP53 and blocks its activity probably by blocking its binding to DNA. Interacts with the Ku 70 kDa subunit of ds-DNA kinase. Interacts with PTTG1IP. Post-translationally, phosphorylated at Ser-165 by CDK1 during mitosis. Phosphorylated in vitro by ds-DNA kinase. In terms of processing, ubiquitinated through 'Lys-11' linkage of ubiquitin moieties by the anaphase promoting complex (APC) at the onset of anaphase, conducting to its degradation. 'Lys-11'-linked ubiquitination is mediated by the E2 ligase UBE2C/UBCH10. As to expression, expressed at low level in most tissues, except in adult testis, where it is highly expressed. Overexpressed in many patients suffering from pituitary adenomas, primary epithelial neoplasias, and esophageal cancer.

The protein resides in the cytoplasm. It localises to the nucleus. Functionally, regulatory protein, which plays a central role in chromosome stability, in the p53/TP53 pathway, and DNA repair. Probably acts by blocking the action of key proteins. During the mitosis, it blocks Separase/ESPL1 function, preventing the proteolysis of the cohesin complex and the subsequent segregation of the chromosomes. At the onset of anaphase, it is ubiquitinated, conducting to its destruction and to the liberation of ESPL1. Its function is however not limited to a blocking activity, since it is required to activate ESPL1. Negatively regulates the transcriptional activity and related apoptosis activity of TP53. The negative regulation of TP53 may explain the strong transforming capability of the protein when it is overexpressed. May also play a role in DNA repair via its interaction with Ku, possibly by connecting DNA damage-response pathways with sister chromatid separation. This is Securin (PTTG1) from Homo sapiens (Human).